The following is a 290-amino-acid chain: Protein EURL homolog (290 aa).

The segment at 185-206 is disordered; sequence SHSQAQKTEETSSGPEGTIQTQ. Positions 228 to 251 form a coiled coil; sequence AKLQQRIQEVFEELTHQVQEKDSL.

Belongs to the EURL family. As to quaternary structure, interacts with CCDC85B. In terms of tissue distribution, expressed in brain (at protein level). Expressed in neural progenitor cells and postmitotic neurons of the embryonic cerebral cortex.

In terms of biological role, plays a role in cortical progenitor cell proliferation and differentiation. Promotes dendritic spine development of post-migratory cortical projection neurons by modulating the beta-catenin signaling pathway. The polypeptide is Protein EURL homolog (Mus musculus (Mouse)).